A 196-amino-acid polypeptide reads, in one-letter code: MSTARFIKCVTVGDGAVGKTCMLISYTSNTFPTDYVPTVFDNFSANVVVDGSTVNLGLWDTAGQEDYNRLRPLSYRGADVFLLAFSLISKASYENIYKKWIPELRHYAHNVPVVLVGTKLDLRDDKQFLIDHPGATPISTSQGEELKKMIGAVTYIECSSKTQQNVKAVFDAAIKVALRPPKPKRKPCKRRTCAFL.

GTP is bound at residue 13 to 20 (GDGAVGKT). The Effector region signature appears at 35-43 (YVPTVFDNF). Residues 60–64 (DTAGQ) and 118–121 (TKLD) contribute to the GTP site. At C193 the chain carries Cysteine methyl ester. The S-geranylgeranyl cysteine moiety is linked to residue C193. The propeptide at 194 to 196 (AFL) is removed in mature form.

Belongs to the small GTPase superfamily. Rho family.

It is found in the cytoplasm. Its subcellular location is the membrane. In terms of biological role, could participate in a signal transduction pathway that controls cytoskeletal organization. Functionally, inactive GDP-bound Rho GTPases reside in the cytosol, are found in a complex with Rho GDP-dissociation inhibitors (Rho GDIs), and are released from the GDI protein in order to translocate to membranes upon activation. This is Rac-like GTP-binding protein RAC13 (RAC13) from Gossypium hirsutum (Upland cotton).